Consider the following 507-residue polypeptide: Probable aldehyde dehydrogenase (507 aa).

219–225 is an NAD(+) binding site; the sequence is GFGAEAG. Catalysis depends on residues E263 and C302.

Belongs to the aldehyde dehydrogenase family.

It carries out the reaction an aldehyde + NAD(+) + H2O = a carboxylate + NADH + 2 H(+). This chain is Probable aldehyde dehydrogenase, found in Mycobacterium bovis (strain ATCC BAA-935 / AF2122/97).